Here is a 90-residue protein sequence, read N- to C-terminus: MARTVNCVKLKREAEGLDYPPYPGELGARIWREISKESWEEWKQIQTRLVNENRLNLADARARKYLQQQMERFLFEDGTVEAQGYVPPSA.

It belongs to the Fe(2+)-trafficking protein family.

In terms of biological role, could be a mediator in iron transactions between iron acquisition and iron-requiring processes, such as synthesis and/or repair of Fe-S clusters in biosynthetic enzymes. The sequence is that of Probable Fe(2+)-trafficking protein from Bordetella avium (strain 197N).